The sequence spans 392 residues: Selenide, water dikinase 1 (392 aa).

Residue C31 is part of the active site. ATP-binding positions include K32, G67 to D69, D87, D110, and G161 to T164. Position 69 (D69) interacts with Mg(2+). Residue D110 coordinates Mg(2+). D265 provides a ligand contact to Mg(2+).

This sequence belongs to the selenophosphate synthase 1 family. Class II subfamily. As to quaternary structure, homodimer. It depends on Mg(2+) as a cofactor.

The protein localises to the cell membrane. Its subcellular location is the nucleus membrane. The enzyme catalyses hydrogenselenide + ATP + H2O = selenophosphate + AMP + phosphate + 2 H(+). Functionally, synthesizes selenophosphate from selenide and ATP. This chain is Selenide, water dikinase 1 (sephs1), found in Xenopus laevis (African clawed frog).